We begin with the raw amino-acid sequence, 426 residues long: Histidine--tRNA ligase (426 aa).

It belongs to the class-II aminoacyl-tRNA synthetase family. Homodimer.

The protein localises to the cytoplasm. It catalyses the reaction tRNA(His) + L-histidine + ATP = L-histidyl-tRNA(His) + AMP + diphosphate + H(+). The sequence is that of Histidine--tRNA ligase from Streptococcus pyogenes serotype M5 (strain Manfredo).